The primary structure comprises 154 residues: Ribonuclease 1 (154 aa).

It belongs to the BetVI family.

It is found in the cytoplasm. In terms of biological role, catalyzes the two-stage endonucleolytic cleavage to 3'-phosphomononucleotides and 3'-phosphooligonucleotides with 2',3'-cyclic phosphate intermediates. The chain is Ribonuclease 1 from Panax ginseng (Korean ginseng).